The primary structure comprises 514 residues: GMP synthase [glutamine-hydrolyzing] (514 aa).

The Glutamine amidotransferase type-1 domain maps to 9 to 199 (MILVLDFGGQ…LFEVCQCTGD (191 aa)). The active-site Nucleophile is cysteine 86. Active-site residues include histidine 173 and glutamate 175. Residues 200–389 (WSMENFIEIE…LGLSDEIVWR (190 aa)) enclose the GMPS ATP-PPase domain. Residue 227–233 (SGGVDSS) participates in ATP binding.

In terms of assembly, homodimer.

The enzyme catalyses XMP + L-glutamine + ATP + H2O = GMP + L-glutamate + AMP + diphosphate + 2 H(+). Its pathway is purine metabolism; GMP biosynthesis; GMP from XMP (L-Gln route): step 1/1. Its function is as follows. Catalyzes the synthesis of GMP from XMP. This chain is GMP synthase [glutamine-hydrolyzing], found in Exiguobacterium sibiricum (strain DSM 17290 / CCUG 55495 / CIP 109462 / JCM 13490 / 255-15).